Here is a 166-residue protein sequence, read N- to C-terminus: MALRKIRTYEDEILRKKSKVVEKFDQRLCQLLDDMKDTMYEANGIGLAAPQVGVLKRAVVIDIGEGAIELVNPEIEQVEGSAVDVEGCLSVPNVWGEVERPQKVVVKAQDRFGNEFRLEAEGLLARAVCHEIDHLDGILFVDKVIRFVSEEEIEQRRSRGDKMDLE.

C88 and H130 together coordinate Fe cation. Residue E131 is part of the active site. H134 contributes to the Fe cation binding site.

It belongs to the polypeptide deformylase family. The cofactor is Fe(2+).

It catalyses the reaction N-terminal N-formyl-L-methionyl-[peptide] + H2O = N-terminal L-methionyl-[peptide] + formate. Its function is as follows. Removes the formyl group from the N-terminal Met of newly synthesized proteins. Requires at least a dipeptide for an efficient rate of reaction. N-terminal L-methionine is a prerequisite for activity but the enzyme has broad specificity at other positions. This Caldicellulosiruptor bescii (strain ATCC BAA-1888 / DSM 6725 / KCTC 15123 / Z-1320) (Anaerocellum thermophilum) protein is Peptide deformylase.